The primary structure comprises 487 residues: MEETSPRRRREDEKSVHSTEPKTTSLQKEVGLLSGICIIVGTIIGSGIFISPKSVLANTESVGPCLIIWAACGVLATLGALCFAELGTMITKSGGEYPYLMEAFGPIPAYLFSWTSLIVMKPSSFAIICLSFSEYVCAAFYLGCRPPAVVVKLLAAAAILLITTVNALSVRLGSYVQNVFTAAKLVIVAIIIISGLVLLAQGNVKNFQNSFEGSQTSVGSISLAFYNGLWAYDGWNQLNYITEELRNPYRNLPMAIVIGIPLVTVCYILMNIAYFTVMTPTELLQSQAVAVTFGDRVLYPASWVVPLFVAFSTIGAANGTCFTAGRLIYVAGREGHMLKVLSYISVKRLTPAPALVFYGIIAIIYIIPGDINSLVNYFSFAAWLFYGMTILGLVVMRFTRKDLERPIKVPIFIPIIVILVSVFLILAPIISSPAWEYLYCVLFILSGLIFYFLFVHYKFRWAQKISRPITKHLQMLMEVVPPEKDPE.

Positions 1-20 (MEETSPRRRREDEKSVHSTE) are enriched in basic and acidic residues. The segment at 1–23 (MEETSPRRRREDEKSVHSTEPKT) is disordered. Residues 1–31 (MEETSPRRRREDEKSVHSTEPKTTSLQKEVG) are Cytoplasmic-facing. At S18 the chain carries Phosphoserine. A helical transmembrane segment spans residues 32 to 55 (LLSGICIIVGTIIGSGIFISPKSV). 43 to 47 (IIGSG) contacts L-arginine. Residues 56 to 62 (LANTESV) are Extracellular-facing. The helical transmembrane segment at 63-84 (GPCLIIWAACGVLATLGALCFA) threads the bilayer. The Cytoplasmic segment spans residues 85 to 110 (ELGTMITKSGGEYPYLMEAFGPIPAY). The helical transmembrane segment at 111–137 (LFSWTSLIVMKPSSFAIICLSFSEYVC) threads the bilayer. Topologically, residues 138-147 (AAFYLGCRPP) are extracellular. 2 consecutive transmembrane segments (helical) span residues 148-169 (AVVV…NALS) and 170-193 (VRLG…IIII). The Extracellular segment spans residues 194–217 (SGLVLLAQGNVKNFQNSFEGSQTS). The helical transmembrane segment at 218-238 (VGSISLAFYNGLWAYDGWNQL) threads the bilayer. D233 lines the L-arginine pocket. Topologically, residues 239 to 251 (NYITEELRNPYRN) are cytoplasmic. A helical transmembrane segment spans residues 252-274 (LPMAIVIGIPLVTVCYILMNIAY). At 275–302 (FTVMTPTELLQSQAVAVTFGDRVLYPAS) the chain is on the extracellular side. A helical membrane pass occupies residues 303-325 (WVVPLFVAFSTIGAANGTCFTAG). Topologically, residues 326 to 351 (RLIYVAGREGHMLKVLSYISVKRLTP) are cytoplasmic. A run of 2 helical transmembrane segments spans residues 352-370 (APAL…IPGD) and 371-391 (INSL…MTIL). Over 392 to 410 (GLVVMRFTRKDLERPIKVP) the chain is Cytoplasmic. The chain crosses the membrane as a helical span at residues 411-431 (IFIPIIVILVSVFLILAPIIS). Residues 432 to 434 (SPA) lie on the Extracellular side of the membrane. The helical transmembrane segment at 435 to 450 (WEYLYCVLFILSGLIF) threads the bilayer. Topologically, residues 451–487 (YFLFVHYKFRWAQKISRPITKHLQMLMEVVPPEKDPE) are cytoplasmic.

It belongs to the amino acid-polyamine-organocation (APC) superfamily. In terms of assembly, disulfide-linked heterodimer composed of the catalytic light chain subunit SLC7A9 and the heavy chain subunit SLC3A1. The heterodimer is the minimal functional unit. Assembles in heterotetramers (dimers of heterodimers) and higher order oligomers; the oligomerization is mediated by SLC3A1 likely to prevent degradation and facilitate heteromer trafficking to the plasma membrane. Interacts with CAV1. Outer medulla of kidney (at protein level). Kidney and small intestine. In the kidney localized to the apical membrane of the proximal tubules.

Its subcellular location is the apical cell membrane. It catalyses the reaction L-leucine(out) + L-arginine(in) = L-leucine(in) + L-arginine(out). The catalysed reaction is L-histidine(out) + L-arginine(in) = L-histidine(in) + L-arginine(out). It carries out the reaction L-arginine(in) + L-phenylalanine(out) = L-arginine(out) + L-phenylalanine(in). The enzyme catalyses L-cysteine(out) + L-arginine(in) = L-cysteine(in) + L-arginine(out). It catalyses the reaction L-cystine(out) + L-arginine(in) = L-cystine(in) + L-arginine(out). The catalysed reaction is L-lysine(out) + L-arginine(in) = L-lysine(in) + L-arginine(out). Its function is as follows. Associates with SLC3A1 to form a functional transporter complex that mediates the electrogenic exchange between cationic amino acids and neutral amino acids, with a stoichiometry of 1:1. Has system b(0,+)-like activity with high affinity for extracellular cationic amino acids and L-cystine and lower affinity for intracellular neutral amino acids. Substrate exchange is driven by high concentration of intracellular neutral amino acids and the intracellular reduction of L-cystine to L-cysteine. Required for reabsorption of L-cystine and dibasic amino acids across the brush border membrane in renal proximal tubules. This Rattus norvegicus (Rat) protein is b(0,+)-type amino acid transporter 1 (Slc7a9).